The chain runs to 151 residues: Ribosome maturation factor RimP (151 aa).

This sequence belongs to the RimP family.

It localises to the cytoplasm. In terms of biological role, required for maturation of 30S ribosomal subunits. In Thermoanaerobacter sp. (strain X514), this protein is Ribosome maturation factor RimP.